A 158-amino-acid chain; its full sequence is C-type lectin (158 aa).

A signal peptide spans methionine 1 to glycine 23. Disulfide bonds link cysteine 26–cysteine 37, cysteine 54–cysteine 154, and cysteine 129–cysteine 146. A C-type lectin domain is found at arginine 33–glutamine 155. A Mannose-binding motif is present at residues glutamate 119 to asparagine 121. Glutamate 127, asparagine 142, and aspartate 143 together coordinate Ca(2+).

Belongs to the true venom lectin family. In terms of tissue distribution, expressed by the venom gland.

Its subcellular location is the secreted. Functionally, mannose-binding lectin which recognizes specific carbohydrate structures and agglutinates a variety of animal cells by binding to cell-surface glycoproteins and glycolipids. May be a calcium-dependent lectin. The chain is C-type lectin from Cerberus rynchops (Dog-faced water snake).